A 260-amino-acid polypeptide reads, in one-letter code: Indole-3-glycerol phosphate synthase (260 aa).

It belongs to the TrpC family.

The enzyme catalyses 1-(2-carboxyphenylamino)-1-deoxy-D-ribulose 5-phosphate + H(+) = (1S,2R)-1-C-(indol-3-yl)glycerol 3-phosphate + CO2 + H2O. It functions in the pathway amino-acid biosynthesis; L-tryptophan biosynthesis; L-tryptophan from chorismate: step 4/5. This chain is Indole-3-glycerol phosphate synthase, found in Thermoanaerobacter pseudethanolicus (strain ATCC 33223 / 39E) (Clostridium thermohydrosulfuricum).